The chain runs to 195 residues: C2 domain-containing protein DDB_G0290753 (195 aa).

The 124-residue stretch at 38–161 (KKLTKETKFE…NIKKYSYTFK (124 aa)) folds into the C2 domain. 5 residues coordinate Ca(2+): Asp-72, Asp-78, Asp-131, Asp-133, and Asp-139.

Requires Ca(2+) as cofactor.

The protein is C2 domain-containing protein DDB_G0290753 of Dictyostelium discoideum (Social amoeba).